Consider the following 817-residue polypeptide: B lymphocyte-induced maturation protein 1 homolog (817 aa).

The interval 1–62 (MGQGSGDDGV…PAGVSASGAR (62 aa)) is disordered. Residues 15 to 61 (FSSAAAAAHSPPHSPLSVGVSSASSATSSSSTPPSSTSPAGVSASGA) show a composition bias toward low complexity. Residues 103-241 (MNLILKSSSK…ANTELSFWFS (139 aa)) form the SET domain. 4 consecutive C2H2-type zinc fingers follow at residues 508–530 (YACK…VRTH), 536–558 (FKCE…HLVH), 564–586 (HRCD…LRLH), and 592–614 (YTCD…KRLH). A C2H2-type 5; degenerate zinc finger spans residues 620–642 (YSCGTCGKKYISPSGLRTHWKTT). A disordered region spans residues 709–817 (LLGQGPSGMQ…LPSLGLPHYP (109 aa)). Positions 779–794 (QGGPSSGSGQQQHPQH) are enriched in low complexity.

As to quaternary structure, interacts with dre-1; the interaction targets blmp-1 for proteasomal degradation. Interacts with ldb-1 and ham-3. Post-translationally, ubiquitinated by the SCF(dre-1) complex, leading to its degradation by the proteasome. As to expression, expressed in hypodermal, vulval, intestinal and distal tip cells.

Its subcellular location is the nucleus. It is found in the cytoplasm. Transcription factor which binds to enhancer elements in the promoter region of genes. Regulates the expression of the transcription factor bed-3 to control vulval development. Promotes terminal differentiation in the hypodermis and is involved in regulation of gonadal outgrowth and entry into the dauer stage. Regulates the timing of dorsalward migration of the distal tip cells of the hermaphrodite gonad by inhibiting precocious unc-5 and lin-29 expression which in turn prevents early dorsalward turning. Plays a role in male tail tip morphogenesis. The sequence is that of B lymphocyte-induced maturation protein 1 homolog from Caenorhabditis elegans.